Consider the following 308-residue polypeptide: D-alanine--D-alanine ligase (308 aa).

The ATP-grasp domain maps to 100–295 (KEVFVRNGLP…FDGLIGRLIE (196 aa)). Residue 127 to 180 (PFAFPAFIKSNNGGSSLALHRVSCPGELARALDELFTRGGEAIIEPAVEGVEVT) participates in ATP binding. Aspartate 249, glutamate 262, and asparagine 264 together coordinate Mg(2+).

The protein belongs to the D-alanine--D-alanine ligase family. Mg(2+) serves as cofactor. It depends on Mn(2+) as a cofactor.

It localises to the cytoplasm. The enzyme catalyses 2 D-alanine + ATP = D-alanyl-D-alanine + ADP + phosphate + H(+). It functions in the pathway cell wall biogenesis; peptidoglycan biosynthesis. Its function is as follows. Cell wall formation. This is D-alanine--D-alanine ligase from Oleidesulfovibrio alaskensis (strain ATCC BAA-1058 / DSM 17464 / G20) (Desulfovibrio alaskensis).